A 253-amino-acid polypeptide reads, in one-letter code: Indole-3-glycerol phosphate synthase (253 aa).

This sequence belongs to the TrpC family.

It catalyses the reaction 1-(2-carboxyphenylamino)-1-deoxy-D-ribulose 5-phosphate + H(+) = (1S,2R)-1-C-(indol-3-yl)glycerol 3-phosphate + CO2 + H2O. It functions in the pathway amino-acid biosynthesis; L-tryptophan biosynthesis; L-tryptophan from chorismate: step 4/5. This chain is Indole-3-glycerol phosphate synthase, found in Bacillus cereus (strain AH187).